Consider the following 291-residue polypeptide: Probable L-ascorbate peroxidase 4, peroxisomal (291 aa).

Catalysis depends on histidine 40, which acts as the Proton acceptor. Histidine 160 is a binding site for heme b. 3 residues coordinate K(+): threonine 161, threonine 177, and aspartate 184. Residues 263-283 form a helical membrane-spanning segment; the sequence is VLAQSAVGVAVAAAVVIVSYL.

The protein belongs to the peroxidase family. Ascorbate peroxidase subfamily. Heme b serves as cofactor. Expressed in leaves, stems and flowers.

The protein resides in the peroxisome membrane. It carries out the reaction L-ascorbate + H2O2 = L-dehydroascorbate + 2 H2O. In terms of biological role, plays a key role in hydrogen peroxide removal. The chain is Probable L-ascorbate peroxidase 4, peroxisomal from Oryza sativa subsp. japonica (Rice).